Reading from the N-terminus, the 289-residue chain is Phosphatidylinositol:ceramide inositolphosphotransferase 3 (289 aa).

5 helical membrane passes run 33-53 (LVLAGLVFQYIHGLAAHGVHY), 77-97 (AFFSETVFVTIFGSFILWTFH), 115-135 (VFVYLAASQSLRIITFFATQL), 169-189 (VIYGCGDLIFSSHTIFTLVFV), and 199-219 (RWIKHLAWLMAVIQSILIIAS). His181 is an active-site residue. Residues His222 and Asp226 contribute to the active site. The chain crosses the membrane as a helical span at residues 223-243 (YTVDIVVAWYTVNLVMFYVDS). The disordered stretch occupies residues 249-289 (AERSSGPSPTPLLPLSTKDSKNKSKEDHQRLLNENNVADDH). Residues 266 to 279 (KDSKNKSKEDHQRL) show a composition bias toward basic and acidic residues. The span at 280–289 (LNENNVADDH) shows a compositional bias: polar residues.

The protein belongs to the sphingomyelin synthase family. In terms of tissue distribution, mostly expressed in stems and flowers, and, to a lower extent, in leaves, roots and siliques.

The protein localises to the membrane. Its function is as follows. Catalyzes the transfer of the phosphorylinositol group from phosphatidylinositol (PI) to phytoceramide, an essential step in sphingolipid biosynthesis. This Arabidopsis thaliana (Mouse-ear cress) protein is Phosphatidylinositol:ceramide inositolphosphotransferase 3 (IPCS3).